The sequence spans 331 residues: Probable protein phosphatase 2C 72 (331 aa).

Residues 43-324 enclose the PPM-type phosphatase domain; it reads LGSVCSIQGT…DDITVICLFL (282 aa). Positions 78, 79, 268, and 315 each coordinate Mn(2+).

The protein belongs to the PP2C family. The cofactor is Mg(2+). Mn(2+) is required as a cofactor.

It carries out the reaction O-phospho-L-seryl-[protein] + H2O = L-seryl-[protein] + phosphate. It catalyses the reaction O-phospho-L-threonyl-[protein] + H2O = L-threonyl-[protein] + phosphate. The protein is Probable protein phosphatase 2C 72 of Arabidopsis thaliana (Mouse-ear cress).